Here is a 100-residue protein sequence, read N- to C-terminus: Protein RADIALIS-like 1 (100 aa).

The region spanning 9–64 (QSSGSWTAKQNKAFEQALATYDQDTPNRWQNVAKVVGGKTTEEVKRHYELLVQDIN) is the SANT domain. Positions 73-100 (FPNYRTSGGCTNGRLSQEEKRMRNMRLQ) are disordered. Polar residues predominate over residues 76-87 (YRTSGGCTNGRL).

The protein localises to the nucleus. In terms of biological role, probable transcription factor. The protein is Protein RADIALIS-like 1 (RL1) of Arabidopsis thaliana (Mouse-ear cress).